Reading from the N-terminus, the 699-residue chain is Auxin response factor 10 (699 aa).

Disordered regions lie at residues 108-136 (AAEARREEENSRPRPTSFAKTLTQSDANN), 505-533 (TDLTIGSPGKPDDAACSPSSGGKKIDDTK), and 551-595 (KNGN…SWSL). Residues 110-119 (EARREEENSR) are compositionally biased toward basic and acidic residues. A compositionally biased stretch (polar residues) spans 125-135 (FAKTLTQSDAN). Positions 125 to 227 (FAKTLTQSDA…NIHVGLRRAK (103 aa)) form a DNA-binding region, TF-B3. The span at 570-593 (PNTSEGSDSGVTQGSPTKNTTPSW) shows a compositional bias: polar residues. One can recognise a PB1 domain in the interval 613–693 (PGQCKVFVES…RKLRILTDAG (81 aa)).

This sequence belongs to the ARF family. In terms of assembly, homodimers and heterodimers.

The protein resides in the nucleus. Auxin response factors (ARFs) are transcriptional factors that bind specifically to the DNA sequence 5'-TGTCTC-3' found in the auxin-responsive promoter elements (AuxREs). The sequence is that of Auxin response factor 10 (ARF10) from Oryza sativa subsp. indica (Rice).